Consider the following 175-residue polypeptide: Alpha-crystallin B chain (175 aa).

Met-1 is subject to N-acetylmethionine. A Phosphoserine modification is found at Ser-19. Residue Ser-41 is glycosylated (O-linked (GlcNAc) serine). 2 positions are modified to phosphoserine: Ser-45 and Ser-59. The 109-residue stretch at 56 to 164 folds into the sHSP domain; it reads RAPSWIDTGL…PERTIPITRE (109 aa). His-83 contributes to the Zn(2+) binding site. Position 92 is an N6-acetyllysine (Lys-92). His-104, Glu-106, His-111, and His-119 together coordinate Zn(2+). The disordered stretch occupies residues 142-175; that stretch reads VLTVNGPRKQASGPERTIPITREEKPAVTAAPKK. An N6-acetyllysine modification is found at Lys-166. Thr-170 is a glycosylation site (O-linked (GlcNAc) threonine).

The protein belongs to the small heat shock protein (HSP20) family. In terms of assembly, heteromer composed of three CRYAA and one CRYAB subunits. Aggregates with homologous proteins, including the small heat shock protein HSPB1, to form large heteromeric complexes. Inter-subunit bridging via zinc ions enhances stability, which is crucial as there is no protein turn over in the lens. Interacts with HSPBAP1 and TTN/titin. Interacts with TMEM109; in the cellular response to DNA damage. Interacts with DES; binds rapidly during early stages of DES filament assembly and a reduced binding seen in the later stages. Interacts with ATP6V1A and with MTOR, forming a ternary complex. As to expression, lens as well as other tissues.

The protein resides in the cytoplasm. Its subcellular location is the nucleus. It localises to the secreted. The protein localises to the lysosome. In terms of biological role, may contribute to the transparency and refractive index of the lens. Has chaperone-like activity, preventing aggregation of various proteins under a wide range of stress conditions. In lens epithelial cells, stabilizes the ATP6V1A protein, preventing its degradation by the proteasome. This is Alpha-crystallin B chain (CRYAB) from Spalax judaei (Judean Mountains blind mole rat).